The following is a 126-amino-acid chain: Large ribosomal subunit protein bL12 (126 aa).

It belongs to the bacterial ribosomal protein bL12 family. Homodimer. Part of the ribosomal stalk of the 50S ribosomal subunit. Forms a multimeric L10(L12)X complex, where L10 forms an elongated spine to which 2 to 4 L12 dimers bind in a sequential fashion. Binds GTP-bound translation factors.

Its function is as follows. Forms part of the ribosomal stalk which helps the ribosome interact with GTP-bound translation factors. Is thus essential for accurate translation. This chain is Large ribosomal subunit protein bL12, found in Nocardia farcinica (strain IFM 10152).